Here is a 152-residue protein sequence, read N- to C-terminus: Protein Smg homolog (152 aa).

The protein belongs to the Smg family.

This Bordetella avium (strain 197N) protein is Protein Smg homolog.